A 174-amino-acid polypeptide reads, in one-letter code: Small ribosomal subunit protein uS12m (174 aa).

It belongs to the universal ribosomal protein uS12 family. In terms of assembly, component of the mitochondrial small ribosomal subunit (mt-SSU). Mature N.crassa 74S mitochondrial ribosomes consist of a small (37S) and a large (54S) subunit. The 37S small subunit contains a 16S ribosomal RNA (16S mt-rRNA) and 32 different proteins. The 54S large subunit contains a 23S rRNA (23S mt-rRNA) and 42 different proteins. uS12m forms part of the decoding center of the mt-SSU.

The protein localises to the mitochondrion. Functionally, component of the mitochondrial ribosome (mitoribosome), a dedicated translation machinery responsible for the synthesis of mitochondrial genome-encoded proteins, including at least some of the essential transmembrane subunits of the mitochondrial respiratory chain. The mitoribosomes are attached to the mitochondrial inner membrane and translation products are cotranslationally integrated into the membrane. This is Small ribosomal subunit protein uS12m (mrps12) from Neurospora crassa (strain ATCC 24698 / 74-OR23-1A / CBS 708.71 / DSM 1257 / FGSC 987).